The primary structure comprises 261 residues: MGLELYLDLLSQPCRSIYIFARTNNIPFEFKHVELFKDSVLGKKPAAASGAERPRTGPSNSEGDGKISLLKKVPVLKDGDFTLAECTAILLYLSRKYNTPDHWYPSDIKKRAQVDEYLSWHHANIRANAPKTMWIKVLIPLFTGQPQPSEKLQEVMEGLSTSLKQFEERFLQDKAFIIGSEISLADLVAIVELMQPVGVGCDIFEDRPRLMEWRRRVEEAVGKELFFQAHEMILNIKELSNIQIDPQLKEHLAPVLMKMLK.

One can recognise a GST N-terminal domain in the interval 2-101; that stretch reads GLELYLDLLS…YLSRKYNTPD (100 aa). Residues 72–73 and 85–86 contribute to the glutathione site; these read KV and EC. The 142-residue stretch at 107–248 folds into the GST C-terminal domain; it reads DIKKRAQVDE…LSNIQIDPQL (142 aa).

This sequence belongs to the GST superfamily. Theta family. As to quaternary structure, homodimer.

The protein localises to the cytoplasm. It carries out the reaction RX + glutathione = an S-substituted glutathione + a halide anion + H(+). Functionally, conjugation of reduced glutathione to a wide number of exogenous and endogenous hydrophobic electrophiles. The sequence is that of Glutathione S-transferase theta-1 (GSTT1) from Gallus gallus (Chicken).